Reading from the N-terminus, the 1089-residue chain is WD repeat-containing protein on Y chromosome (1089 aa).

WD repeat units lie at residues Glu-155–Ala-199, Pro-207–Phe-249, Arg-329–Ala-368, Gly-372–Thr-411, Thr-462–Ile-501, Thr-514–Asn-553, and Phe-601–Ser-641. The interval Lys-661–His-684 is disordered. Positions His-672 to His-684 are enriched in low complexity. 2 WD repeats span residues Lys-767–Ala-806 and Gly-850–Leu-889. Residues Leu-1049–Asn-1089 form a disordered region.

In Drosophila willistoni (Fruit fly), this protein is WD repeat-containing protein on Y chromosome.